The primary structure comprises 192 residues: Superoxide dismutase [Fe] (192 aa).

Fe cation contacts are provided by His-27, His-74, Asp-157, and His-161.

It belongs to the iron/manganese superoxide dismutase family. Homodimer. Fe cation serves as cofactor.

The catalysed reaction is 2 superoxide + 2 H(+) = H2O2 + O2. Destroys superoxide anion radicals which are normally produced within the cells and which are toxic to biological systems. This is Superoxide dismutase [Fe] (sodB) from Bordetella pertussis (strain Tohama I / ATCC BAA-589 / NCTC 13251).